The following is a 362-amino-acid chain: tRNA/tmRNA (uracil-C(5))-methyltransferase (362 aa).

S-adenosyl-L-methionine contacts are provided by Gln186, Tyr214, Asn219, Glu235, and Asp295. Cys320 serves as the catalytic Nucleophile. Glu354 serves as the catalytic Proton acceptor.

Belongs to the class I-like SAM-binding methyltransferase superfamily. RNA M5U methyltransferase family. TrmA subfamily.

The enzyme catalyses uridine(54) in tRNA + S-adenosyl-L-methionine = 5-methyluridine(54) in tRNA + S-adenosyl-L-homocysteine + H(+). The catalysed reaction is uridine(341) in tmRNA + S-adenosyl-L-methionine = 5-methyluridine(341) in tmRNA + S-adenosyl-L-homocysteine + H(+). Functionally, dual-specificity methyltransferase that catalyzes the formation of 5-methyluridine at position 54 (m5U54) in all tRNAs, and that of position 341 (m5U341) in tmRNA (transfer-mRNA). This Ectopseudomonas mendocina (strain ymp) (Pseudomonas mendocina) protein is tRNA/tmRNA (uracil-C(5))-methyltransferase.